The primary structure comprises 312 residues: 1-phosphofructokinase (312 aa).

ATP-binding positions include 223 to 228 (SLGAEG) and 254 to 255 (GD). The Proton acceptor role is filled by Asp255.

This sequence belongs to the carbohydrate kinase PfkB family.

It carries out the reaction beta-D-fructose 1-phosphate + ATP = beta-D-fructose 1,6-bisphosphate + ADP + H(+). Functionally, catalyzes the ATP-dependent phosphorylation of fructose-l-phosphate to fructose-l,6-bisphosphate. In Escherichia coli O157:H7, this protein is 1-phosphofructokinase (fruK).